The following is a 425-amino-acid chain: L-lysine 2,3-aminomutase (425 aa).

The Radical SAM core domain occupies His-113–Ala-325. 3 residues coordinate [4Fe-4S] cluster: Cys-127, Cys-131, and Cys-134. An N6-(pyridoxal phosphate)lysine modification is found at Lys-339.

It belongs to the radical SAM superfamily. KamA family. As to quaternary structure, homotetramer. The cofactor is [4Fe-4S] cluster. Requires pyridoxal 5'-phosphate as cofactor.

The enzyme catalyses L-lysine = (3S)-3,6-diaminohexanoate. It participates in amino-acid degradation; L-lysine degradation via acetate pathway. Its function is as follows. Catalyzes the interconversion of L-alpha-lysine and L-beta-lysine. This is L-lysine 2,3-aminomutase from Fusobacterium nucleatum subsp. nucleatum (strain ATCC 25586 / DSM 15643 / BCRC 10681 / CIP 101130 / JCM 8532 / KCTC 2640 / LMG 13131 / VPI 4355).